Reading from the N-terminus, the 440-residue chain is Transposon Ty1-GR2 Gag polyprotein (440 aa).

Positions 1 to 16 (MESQQLSQHSHISHGS) are enriched in low complexity. Disordered stretches follow at residues 1–93 (MESQ…MMTQ), 126–173 (PQSQ…RPPP), and 352–440 (GSRN…PGTY). Polar residues-rich tracts occupy residues 48 to 60 (TKAN…TPAS) and 127 to 152 (QSQF…GNTF). Low complexity predominate over residues 153-165 (TDSSSADSDMTST). Residues 299–401 (NNGIHINNKV…NSKSKTARAH (103 aa)) form an RNA-binding region. Residues 402-418 (NVSTSNNSPSTDNDSIS) show a composition bias toward low complexity. Ser416 bears the Phosphoserine mark. Positions 419-428 (KSTTEPIQLN) are enriched in polar residues. The span at 429-440 (NKHDLHLRPGTY) shows a compositional bias: basic and acidic residues.

As to quaternary structure, homotrimer.

It localises to the cytoplasm. Capsid protein (CA) is the structural component of the virus-like particle (VLP), forming the shell that encapsulates the retrotransposons dimeric RNA genome. The particles are assembled from trimer-clustered units and there are holes in the capsid shells that allow for the diffusion of macromolecules. CA also has nucleocapsid-like chaperone activity, promoting primer tRNA(i)-Met annealing to the multipartite primer-binding site (PBS), dimerization of Ty1 RNA and initiation of reverse transcription. The polypeptide is Transposon Ty1-GR2 Gag polyprotein (TY1A-GR2) (Saccharomyces cerevisiae (strain ATCC 204508 / S288c) (Baker's yeast)).